The chain runs to 444 residues: MSLPDSLPSSSSSPPVTREETGFHRFEHHGNDSGFDHRDRPPWNRSEYDYRHGSVVASENVRNNSTSEDPWSCVVVVATFCIFVSMTLILGLYGTTNVWLGPNSSFLIKPTSVFVQNVIVEELGNKGSGLILYGLNQAPQLDVLTKWSEVHYLAVPNDSYKYWIQYLNKGSRVKVSYNVESVGSSLYLVIAQGVDGLSEWVQDPTRPDTTLSWHIISDSGYIEQDITKSSSYYVAVGNVYLNEVKATIDIQVEGVLYDTTNAYYNCSFPNDKCTLSVPLFGTNAAVLTSPGPKLNNSKNEFCAKLSYEPRWIAYIVCMGVVTALLLIVSSLFNKRQPVTEDETVDENDDVAPLIPGKDDDNSSWCSSYSSILTSTEELEGAHGEGHSSTRYLCAICYDAPRDCFFLSCGHCVACFQCGTRIAETSGFCPVCRKKIRKVKKIFNV.

Over residues 1–15 (MSLPDSLPSSSSSPP) the composition is skewed to low complexity. The disordered stretch occupies residues 1 to 41 (MSLPDSLPSSSSSPPVTREETGFHRFEHHGNDSGFDHRDRP). The segment covering 17–41 (TREETGFHRFEHHGNDSGFDHRDRP) has biased composition (basic and acidic residues). Helical transmembrane passes span 74–94 (VVVVATFCIFVSMTLILGLYG) and 312–332 (IAYIVCMGVVTALLLIVSSLF). Residues 393 to 432 (CAICYDAPRDCFFLSCGHCVACFQCGTRIAETSGFCPVCR) form an RING-type zinc finger.

Interacts with At1g78040, At1g10650, VHA-c4/AVAP4, VHA-c''2/VMA16 and TUFA. Expressed in the shoot apical meristems (SAM), root tips, pollen and inflorescences.

The protein resides in the endomembrane system. It catalyses the reaction S-ubiquitinyl-[E2 ubiquitin-conjugating enzyme]-L-cysteine + [acceptor protein]-L-lysine = [E2 ubiquitin-conjugating enzyme]-L-cysteine + N(6)-ubiquitinyl-[acceptor protein]-L-lysine.. It functions in the pathway protein modification; protein ubiquitination. Functionally, exhibits E2-dependent E3 ligase activity. Involved in pollen mitosis II (PMII) regulation during male gametogenesis. This is E3 ubiquitin-protein ligase APD2 from Arabidopsis thaliana (Mouse-ear cress).